We begin with the raw amino-acid sequence, 506 residues long: Glutamate--tRNA ligase (506 aa).

A 'HIGH' region motif is present at residues 24-34 (PSPTGTPHVGL). Residues 124–147 (TPEEVEQRHRAKGEDPKRGYDNYD) are disordered. Residues 128 to 147 (VEQRHRAKGEDPKRGYDNYD) are compositionally biased toward basic and acidic residues. The 'KMSKS' region signature appears at 268–272 (KLSKR). Residue Lys-271 coordinates ATP.

Belongs to the class-I aminoacyl-tRNA synthetase family. Glutamate--tRNA ligase type 1 subfamily. As to quaternary structure, monomer.

It is found in the cytoplasm. It catalyses the reaction tRNA(Glu) + L-glutamate + ATP = L-glutamyl-tRNA(Glu) + AMP + diphosphate. Its function is as follows. Catalyzes the attachment of glutamate to tRNA(Glu) in a two-step reaction: glutamate is first activated by ATP to form Glu-AMP and then transferred to the acceptor end of tRNA(Glu). The protein is Glutamate--tRNA ligase of Kocuria rhizophila (strain ATCC 9341 / DSM 348 / NBRC 103217 / DC2201).